Reading from the N-terminus, the 818-residue chain is Sorting nexin-29 (818 aa).

The region spanning Ser-36–Lys-180 is the RUN domain. Residues Val-267–Ser-299 are disordered. Phosphoserine is present on residues Ser-268, Ser-291, Ser-292, Ser-330, Ser-344, Ser-447, and Ser-452. 2 disordered regions span residues Lys-343–Thr-375 and Arg-441–Ser-462. Over residues Ala-445–Ser-462 the composition is skewed to low complexity. The stretch at Met-467–Val-547 forms a coiled coil. Ser-642 is modified (phosphoserine). At Thr-644 the chain carries Phosphothreonine. Phosphoserine is present on residues Ser-645 and Ser-649. The region spanning Ala-659–Gly-782 is the PX domain. Residues Pro-781 to Leu-818 form a disordered region.

It belongs to the sorting nexin family.

The chain is Sorting nexin-29 (Snx29) from Mus musculus (Mouse).